Consider the following 68-residue polypeptide: Beta-toxin Cl13 (68 aa).

The 66-residue stretch at lysine 1–lysine 66 folds into the LCN-type CS-alpha/beta domain. Disulfide bonds link cysteine 12–cysteine 65, cysteine 16–cysteine 41, cysteine 25–cysteine 46, and cysteine 29–cysteine 48. Lysine 66 bears the Lysine amide mark.

It belongs to the long (4 C-C) scorpion toxin superfamily. Sodium channel inhibitor family. Beta subfamily. Expressed by the venom gland.

The protein localises to the secreted. In terms of biological role, beta toxins bind voltage-independently at site-4 of sodium channels (Nav) and shift the voltage of activation toward more negative potentials thereby affecting sodium channel activation and promoting spontaneous and repetitive firing. Inhibits sodium channels Nav1.4/SCN4A, Nav1.5/SCN5A and Nav1.6/SCN8A. Also has a weak inhibitory effect on Nav1.2/SCN2A. Is lethal to mice. The protein is Beta-toxin Cl13 of Centruroides limpidus (Mexican scorpion).